The chain runs to 136 residues: C-type natriuretic peptide prohormone (136 aa).

The signal sequence occupies residues 1–21 (MSGQTSFYCGLLLVLLIQAQA). Cys-120 and Cys-136 form a disulfide bridge.

It belongs to the natriuretic peptide family. In terms of tissue distribution, CNP-115 is differentially processed to produce CNP-38 and CNP-39 in the heart and CNP-22 in the brain.

Its subcellular location is the secreted. Hormone which may be vasoactive and natriuretic. Has a cGMP-stimulating activity. In Triakis scyllium (Banded houndshark), this protein is C-type natriuretic peptide prohormone.